Here is a 1095-residue protein sequence, read N- to C-terminus: DNA polymerase delta catalytic subunit (1095 aa).

Over residues M1–P11 the composition is skewed to basic residues. The segment at M1–T37 is disordered. Positions 1007, 1010, 1020, and 1023 each coordinate Zn(2+). The CysA-type zinc-finger motif lies at C1007–C1023. C1052, C1055, C1065, and C1070 together coordinate [4Fe-4S] cluster. Residues C1052–C1070 carry the CysB motif motif.

Belongs to the DNA polymerase type-B family. Heterodimer with subunits of 125 kDa and 50 kDa. The 125 kDa subunit contains the polymerase active site and most likely the active site for the 3'-5' exonuclease activity. [4Fe-4S] cluster serves as cofactor.

It localises to the nucleus. The catalysed reaction is DNA(n) + a 2'-deoxyribonucleoside 5'-triphosphate = DNA(n+1) + diphosphate. Its function is as follows. This polymerase possesses two enzymatic activities: DNA synthesis (polymerase) and an exonucleolytic activity that degrades single-stranded DNA in the 3'- to 5'-direction. The chain is DNA polymerase delta catalytic subunit (POLD1) from Arabidopsis thaliana (Mouse-ear cress).